The primary structure comprises 876 residues: Phosphoenolpyruvate carboxylase (876 aa).

Catalysis depends on residues H138 and K543.

The protein belongs to the PEPCase type 1 family. Mg(2+) is required as a cofactor.

It carries out the reaction oxaloacetate + phosphate = phosphoenolpyruvate + hydrogencarbonate. Its function is as follows. Forms oxaloacetate, a four-carbon dicarboxylic acid source for the tricarboxylic acid cycle. The polypeptide is Phosphoenolpyruvate carboxylase (Vibrio atlanticus (strain LGP32) (Vibrio splendidus (strain Mel32))).